The chain runs to 274 residues: Tyrosinase (274 aa).

6 residues coordinate Cu cation: His-38, His-54, His-63, His-190, His-194, and His-216.

Belongs to the tyrosinase family. Cu(2+) serves as cofactor.

The enzyme catalyses 2 L-dopa + O2 = 2 L-dopaquinone + 2 H2O. It carries out the reaction L-tyrosine + O2 = L-dopaquinone + H2O. Its function is as follows. This is a copper-containing oxidase that functions in the formation of pigments such as melanins and other polyphenolic compounds. This chain is Tyrosinase (melC2), found in Streptomyces glaucescens.